The sequence spans 60 residues: U1-theraphotoxin-Agm3a (60 aa).

An N-terminal signal peptide occupies residues 1–21 (MKFSVLVFILGLVLLLALSSA). Residues 22 to 29 (TEMEENAR) constitute a propeptide that is removed on maturation. 3 cysteine pairs are disulfide-bonded: Cys31–Cys45, Cys38–Cys50, and Cys44–Cys57.

Belongs to the neurotoxin 10 (Hwtx-1) family. 63 (VsTx1) subfamily. As to expression, expressed by the venom gland.

Its subcellular location is the secreted. Inhibits sodium channels Nav1.7/SCN9A and potassium channels Kv11.1/KCNH2. Also binds the voltage-sensor domain of the potassium channel KvAP (from the archaeon Aeropyrum pernix) with very slow apparent binding kinetics and affects channel gating. Reaches its target by dynamically partitioning into anionic or zwitterionic headgroup lipid membranes. May bind to the open state of KvAP. This Acanthoscurria gomesiana (Tarantula spider) protein is U1-theraphotoxin-Agm3a.